A 124-amino-acid chain; its full sequence is Small ribosomal subunit protein uS13 (124 aa).

The disordered stretch occupies residues 97 to 124; the sequence is PVRGQRTKTNARTRKGPKRTIAGKKKAR.

This sequence belongs to the universal ribosomal protein uS13 family. In terms of assembly, part of the 30S ribosomal subunit. Forms a loose heterodimer with protein S19. Forms two bridges to the 50S subunit in the 70S ribosome.

Located at the top of the head of the 30S subunit, it contacts several helices of the 16S rRNA. In the 70S ribosome it contacts the 23S rRNA (bridge B1a) and protein L5 of the 50S subunit (bridge B1b), connecting the 2 subunits; these bridges are implicated in subunit movement. Contacts the tRNAs in the A and P-sites. In Mycolicibacterium gilvum (strain PYR-GCK) (Mycobacterium gilvum (strain PYR-GCK)), this protein is Small ribosomal subunit protein uS13.